Consider the following 148-residue polypeptide: Stathmin (148 aa).

Residues 4–145 (SDIQVKELEK…NKEGKDPGEA (142 aa)) form the SLD domain. A Phosphoserine; by PKA modification is found at Ser16. Position 38 is a phosphoserine; by CDK1 (Ser38). Residues 41 to 140 (KKKDLSLEEI…EEVRKNKEGK (100 aa)) are a coiled coil. The residue at position 63 (Ser63) is a Phosphoserine; by PKA. A disordered region spans residues 122 to 148 (RLREKDKHIEEVRKNKEGKDPGEAETN).

This sequence belongs to the stathmin family. Binds to two alpha/beta-tubulin heterodimers. In terms of processing, many different phosphorylated forms are observed depending on specific combinations among the sites which can be phosphorylated. MAPK is responsible for the phosphorylation of stathmin in response to NGF.

The protein localises to the cytoplasm. The protein resides in the cytoskeleton. Functionally, involved in the regulation of the microtubule (MT) filament system by destabilizing microtubules. It prevents assembly and promotes disassembly of microtubules. This chain is Stathmin (STMN1), found in Gallus gallus (Chicken).